Consider the following 432-residue polypeptide: Enolase (432 aa).

Q167 is a binding site for (2R)-2-phosphoglycerate. E209 serves as the catalytic Proton donor. Mg(2+) is bound by residues D246, E289, and D316. (2R)-2-phosphoglycerate contacts are provided by K341, R370, S371, and K392. K341 serves as the catalytic Proton acceptor.

The protein belongs to the enolase family. Mg(2+) is required as a cofactor.

It localises to the cytoplasm. The protein localises to the secreted. Its subcellular location is the cell surface. It catalyses the reaction (2R)-2-phosphoglycerate = phosphoenolpyruvate + H2O. It participates in carbohydrate degradation; glycolysis; pyruvate from D-glyceraldehyde 3-phosphate: step 4/5. Catalyzes the reversible conversion of 2-phosphoglycerate (2-PG) into phosphoenolpyruvate (PEP). It is essential for the degradation of carbohydrates via glycolysis. This chain is Enolase, found in Thermotoga neapolitana (strain ATCC 49049 / DSM 4359 / NBRC 107923 / NS-E).